Consider the following 2212-residue polypeptide: Voltage-dependent P/Q-type calcium channel subunit alpha-1A (2212 aa).

Over 1 to 100 (MARFGDEMPG…KYAKKITEWP (100 aa)) the chain is Cytoplasmic. Residues 87–365 (NVVRKYAKKI…LVLGVLSGEF (279 aa)) form an I repeat. Residues 101 to 119 (PFEYMILATIIANCIVLAL) form a helical membrane-spanning segment. Residues 120 to 138 (EQHLPDDDKTPMSERLDDT) lie on the Extracellular side of the membrane. The helical transmembrane segment at 139–156 (EPYFIGIFCFEAGIKIVA) threads the bilayer. The Cytoplasmic segment spans residues 157-168 (LGFAFHKGSYLR). A helical transmembrane segment spans residues 169–184 (NGWNVMDFVVVLTGIL). Topologically, residues 185–192 (ATVGTEFD) are extracellular. Residues 193 to 211 (LRTLRAVRVLRPLKLVSGI) traverse the membrane as a helical segment. Residues 212–230 (PSLQVVLKSIMKAMIPLLQ) lie on the Cytoplasmic side of the membrane. A helical transmembrane segment spans residues 231–250 (IGLLLFFAILIFAIIGLEFY). Over 251-337 (MGKFHTTCFE…NSNDASGNTW (87 aa)) the chain is Extracellular. Asn285 carries N-linked (GlcNAc...) asparagine glycosylation. Glu320 provides a ligand contact to Ca(2+). Residues 338-362 (NWLYFIPLIIIGSFFMLNLVLGVLS) form a helical membrane-spanning segment. At 363–489 (GEFAKERERV…FYIRRMVKTQ (127 aa)) the chain is on the cytoplasmic side. The segment at 385 to 402 (QQIERELNGYMEWISKAE) is binding to the beta subunit. Residue Thr411 is modified to Phosphothreonine. 2 positions are modified to phosphoserine: Ser450 and Ser453. Residues 475-719 (ERRMRFYIRR…VFLAIAVDNL (245 aa)) form an II repeat. Residues 490–509 (AFYWTVLSLVALNTLWLAIV) traverse the membrane as a helical segment. Over 510-523 (HYNQPEWLSDFLYY) the chain is Extracellular. Residues 524-543 (AEFIFLGLFMSEMFIKMYGL) form a helical membrane-spanning segment. The Cytoplasmic segment spans residues 544–551 (GTRPYFHS). Residues 552–570 (SFNCFDCGVIIGSIFEVIW) form a helical membrane-spanning segment. The Extracellular segment spans residues 571–580 (AVIKPGTSFG). Residues 581–599 (ISVLRALRLLRIFKVTKYW) traverse the membrane as a helical segment. The Cytoplasmic portion of the chain corresponds to 600-618 (ASLRNLVVSLLNSMKSIIS). The chain crosses the membrane as a helical span at residues 619 to 638 (LLFLLFLFIVVFALLGMQLF). Topologically, residues 639–691 (GGQFNFDEGTPPTNFDTFPAAIMTVFQILTGEDWNEVMYDEIKSQGGVQGGMV) are extracellular. Glu670 lines the Ca(2+) pocket. A helical membrane pass occupies residues 692-716 (FSIYFIVLTLFGNYTLLNVFLAIAV). Residues 717–1190 (DNLANAQELT…TNPLRRLCHY (474 aa)) lie on the Cytoplasmic side of the membrane. Ser752, Ser755, and Ser792 each carry phosphoserine. Composition is skewed to basic and acidic residues over residues 814–824 (PDVKTHLDRPL), 850–862 (RPRESARDPDARR), 871–924 (APGR…EGEP), and 932–958 (RPGDEPDDRPERRPRPRDATRPARAAD). Disordered regions lie at residues 814–1117 (PDVK…RKPE) and 1137–1170 (VNKNANPDPLPKKEEEKKEEEEADPGEDGPKPMP). Residues Ser1038, Ser1042, and Ser1051 each carry the phosphoserine modification. The span at 1056–1073 (GNSTNPGPALATNPQNAA) shows a compositional bias: polar residues. Residues 1074 to 1083 (SRRTPNNPGN) are compositionally biased toward low complexity. Residues 1094-1111 (ENSLIVTNPSSTQPNSAK) show a composition bias toward polar residues. A compositionally biased stretch (acidic residues) spans 1153 to 1163 (KKEEEEADPGE). One copy of the III repeat lies at 1182 to 1465 (NPLRRLCHYI…IFVALIIITF (284 aa)). A helical membrane pass occupies residues 1191–1214 (ILNLRYFEMCILMVIAMSSIALAA). Residues 1215–1231 (EDPVQPNAPRNNVLRYF) are Extracellular-facing. Residues 1232 to 1251 (DYVFTGVFTFEMVIKMIDLG) traverse the membrane as a helical segment. Over 1252–1258 (LVLHQGA) the chain is Cytoplasmic. Residues 1259–1282 (YFRDLWNILDFIVVSGALVAFAFT) form a helical membrane-spanning segment. Residues 1283–1293 (GNSKGKDINTI) are Extracellular-facing. A helical transmembrane segment spans residues 1294–1311 (KSLRVLRVLRPLKTIKRL). Residues 1312–1330 (PKLKAVFDCVVNSLKNVFN) are Cytoplasmic-facing. The helical transmembrane segment at 1331–1350 (ILIVYMLFMFIFAVVAVQLF) threads the bilayer. Topologically, residues 1351–1437 (KGKFFHCTDE…QGPSPGYRME (87 aa)) are extracellular. Glu1411 is a Ca(2+) binding site. Residues 1438–1462 (MSIFYVVYFVVFPFFFVNIFVALII) form a helical membrane-spanning segment. Over 1463 to 1518 (ITFQEQGDKMMEEYSLEKNERACIDFAISAKPLTRHMPQNKQSFQYRMWQFVVSPP) the chain is Cytoplasmic. An IV repeat occupies 1502-1765 (NKQSFQYRMW…LFVAVIMDNF (264 aa)). Residues 1519–1537 (FEYTIMAMIALNTIVLMMK) traverse the membrane as a helical segment. At 1538 to 1551 (FYGASVAYENALRV) the chain is on the extracellular side. A helical transmembrane segment spans residues 1552–1573 (FNIVFTSLFSLECVLKVMAFGI). The Cytoplasmic segment spans residues 1574 to 1580 (LNYFRDA). A helical transmembrane segment spans residues 1581–1600 (WNIFDFVTVLGSITDILVTE). The Extracellular portion of the chain corresponds to 1601 to 1607 (FGNNFIN). Residue Asn1607 is glycosylated (N-linked (GlcNAc...) asparagine). Residues 1608 to 1626 (LSFLRLFRAARLIKLLRQG) traverse the membrane as a helical segment. Residues 1627 to 1645 (YTIRILLWTFVQSFKALPY) lie on the Cytoplasmic side of the membrane. The helical transmembrane segment at 1646–1665 (VCLLIAMLFFIYAIIGMQVF) threads the bilayer. Residues 1666–1737 (GNIGIDGEDE…IQKPECGNEF (72 aa)) are Extracellular-facing. The chain crosses the membrane as a helical span at residues 1738–1763 (AYFYFVSFIFLCSFLMLNLFVAVIMD). Over 1764–2212 (NFEYLTRDSS…EGREHATHRQ (449 aa)) the chain is Cytoplasmic. Thr1935 carries the phosphothreonine modification. A disordered region spans residues 1940-2212 (QRMEPPSPTQ…EGREHATHRQ (273 aa)). Polar residues-rich tracts occupy residues 1948–1963 (TQEGGPSQNALPSTQL) and 1972–1997 (QESSMKESPSWVTQRAQEMFQKTGTW). A phosphoserine mark is found at Ser1998, Ser2016, Ser2028, Ser2030, Ser2071, and Ser2091. Positions 2008–2017 (PNSQPNSQSV) are enriched in polar residues. The segment covering 2018–2034 (EMREMGTDGYSDSEHYL) has biased composition (basic and acidic residues). Over residues 2064–2073 (LSTISDTSPM) the composition is skewed to polar residues. Basic and acidic residues-rich tracts occupy residues 2085–2102 (RRLDDYSLERVPPEENQR) and 2143–2153 (PSKDRDQDRGR). The span at 2154–2172 (PKDRKHRPHHHHHHHHHHP) shows a compositional bias: basic residues. Residues 2173 to 2212 (PAPDRERYAQERPDTGRARAREQRWSRSPSEGREHATHRQ) are compositionally biased toward basic and acidic residues.

Belongs to the calcium channel alpha-1 subunit (TC 1.A.1.11) family. CACNA1A subfamily. As to quaternary structure, voltage-dependent calcium channels are multisubunit complexes, consisting of alpha-1, alpha-2, beta and delta subunits in a 1:1:1:1 ratio. The channel activity is directed by the pore-forming and voltage-sensitive alpha-1 subunit. In many cases, this subunit is sufficient to generate voltage-sensitive calcium channel activity. The auxiliary subunits beta and alpha-2/delta linked by a disulfide bridge regulate the channel activity. Interacts (via C-terminal CDB motif) with CABP1 in the pre- and postsynaptic membranes. Interacts with the spider omega-agatoxin-IVA (AC P30288). Interacts with TSPOAP1. As to expression, brain specific. Purkinje cells contain predominantly P-type VSCC, the Q-type being a prominent calcium current in cerebellar granule cells. Also found in heart, in kidney distal convoluted tubule (DCT), and in pituitary.

It localises to the cell membrane. It catalyses the reaction Ca(2+)(in) = Ca(2+)(out). Functionally, voltage-sensitive calcium channels (VSCC) mediate the entry of calcium ions into excitable cells and are also involved in a variety of calcium-dependent processes, including muscle contraction, hormone or neurotransmitter release, gene expression, cell motility, cell division and cell death. The isoform alpha-1A gives rise to P and/or Q-type calcium currents. P/Q-type calcium channels belong to the 'high-voltage activated' (HVA) group and are specifically blocked by the spider omega-agatoxin-IVA (AC P30288). They are however insensitive to dihydropyridines (DHP). This chain is Voltage-dependent P/Q-type calcium channel subunit alpha-1A, found in Rattus norvegicus (Rat).